The primary structure comprises 286 residues: 4-hydroxybenzoate octaprenyltransferase (286 aa).

9 helical membrane-spanning segments follow: residues 22 to 42, 45 to 65, 90 to 110, 113 to 133, 142 to 162, 169 to 189, 212 to 232, 236 to 256, and 265 to 285; these read IGTL…SAGV, FSLL…GCVI, LTAV…FVLV, LNQF…IYPF, QVVL…AVVG, WLLF…YAMV, LYIA…GWLE, VSYY…QWLI, and FRAF…IMLA.

This sequence belongs to the UbiA prenyltransferase family. Mg(2+) is required as a cofactor.

The protein localises to the cell inner membrane. The enzyme catalyses all-trans-octaprenyl diphosphate + 4-hydroxybenzoate = 4-hydroxy-3-(all-trans-octaprenyl)benzoate + diphosphate. Its pathway is cofactor biosynthesis; ubiquinone biosynthesis. Catalyzes the prenylation of para-hydroxybenzoate (PHB) with an all-trans polyprenyl group. Mediates the second step in the final reaction sequence of ubiquinone-8 (UQ-8) biosynthesis, which is the condensation of the polyisoprenoid side chain with PHB, generating the first membrane-bound Q intermediate 3-octaprenyl-4-hydroxybenzoate. This Tolumonas auensis (strain DSM 9187 / NBRC 110442 / TA 4) protein is 4-hydroxybenzoate octaprenyltransferase.